Reading from the N-terminus, the 414-residue chain is MAALRYAGLDDTDSEDELPPGWEERTTKDGWVYYANHTEEKTQWEHPKTGKRKRVAGDLPYGWEQGTDENGQVFFVDHINKRTTYLDPRLAFTVDDNPTKPTTRQRYDGSTTALEILQGRDFTGKVVVVTGANSGIGFETAKSFALHGAHVILACRNMARASEAVSRILEEWHKAKVEAVTLDLALLRSVQHFAEAFKAKNVPLHVLVCNAATFALPWSLTKDGLETTFQVNHLGHFYLVQLLQDVLCRSAPARVIVVSSESHRFTDINDSLGKLDFSRLSPTKNDYWAMLAYNRSKLCNVLFSNELHRRLSPRGVTSNAVHPGNMMYSNIHRSWWVYTLLFTLARPFTKSMQQGAATTVYCAAAPELEGLGGMYFNNCCRCMPSPEAQSEETARTLWALSERLIQERLGSQSG.

A disordered region spans residues 1-24 (MAALRYAGLDDTDSEDELPPGWEE). The residue at position 12 (T12) is a Phosphothreonine. A Phosphoserine modification is found at S14. A WW 1 domain is found at 16-49 (DELPPGWEERTTKDGWVYYANHTEEKTQWEHPKT). The residue at position 33 (Y33) is a Phosphotyrosine. A Nuclear localization signal motif is present at residues 50 to 55 (GKRKRV). Positions 57 to 90 (GDLPYGWEQGTDENGQVFFVDHINKRTTYLDPRL) constitute a WW 2 domain. Residues 125–414 (KVVVVTGANS…IQERLGSQSG (290 aa)) are interaction with MAPT. 131–137 (GANSGIG) is an NADP(+) binding site. The tract at residues 209-273 (CNAATFALPW…RFTDINDSLG (65 aa)) is mediates targeting to the mitochondria. Residue S260 participates in substrate binding. Y287 is modified (phosphotyrosine; by TNK2). The Proton acceptor role is filled by Y293.

It belongs to the short-chain dehydrogenases/reductases (SDR) family. In terms of assembly, interacts with TP53, p73/TP73 and MAPK8. Interacts with MAPT/TAU, RUNX2 and HYAL2. Forms a ternary complex with TP53 and MDM2. Interacts with ERBB4, LITAF and WBP1. Interacts with DVL1, DVL2 and DVL3. May interact with FAM189B and SCOTIN. Interacts with TNK2. Interacts with TMEM207. Interacts (via WW domain) with VOPP1. Phosphorylated upon genotoxic stress. Phosphorylation of Tyr-33 regulates interaction with TP53, TP73 and MAPK8. May also regulate proapoptotic activity. Phosphorylation by TNK2 is associated with polyubiquitination and degradation. In terms of processing, ubiquitinated when phosphorylated by TNK2, leading to its degradation.

The protein resides in the cytoplasm. The protein localises to the nucleus. It is found in the mitochondrion. Its subcellular location is the golgi apparatus. It localises to the lysosome. Putative oxidoreductase. Acts as a tumor suppressor and plays a role in apoptosis. May function synergistically with p53/TP53 to control genotoxic stress-induced cell death. Plays a role in TGFB1 signaling and TGFB1-mediated cell death. May also play a role in tumor necrosis factor (TNF)-mediated cell death. Required for normal bone development. Inhibits Wnt signaling, probably by sequestering DVL2 in the cytoplasm. The protein is WW domain-containing oxidoreductase (WWOX) of Pongo abelii (Sumatran orangutan).